A 756-amino-acid polypeptide reads, in one-letter code: Serine/threonine-protein kinase DCLK1 (756 aa).

2 positions are modified to phosphoserine: Ser32 and Ser36. Thr46 is subject to Phosphothreonine. Doublecortin domains are found at residues 57 to 143 (KKVR…LEYT) and 186 to 269 (KLVT…QDDF). The interval 288-393 (ASASRRGTTK…QRGWRREESE (106 aa)) is disordered. Over residues 297 to 313 (KSPGPSRRSKSPASTSS) the composition is skewed to low complexity. 13 positions are modified to phosphoserine: Ser305, Ser307, Ser330, Ser332, Ser334, Ser337, Ser347, Ser352, Ser353, Ser355, Ser358, Cys362, and Ser364. Positions 347 to 364 (SQHGGSSTSLSSTKVCSS) are enriched in low complexity. Residues 366–375 (DENDGPGEGD) show a composition bias toward acidic residues. Ser392 carries the post-translational modification Phosphoserine. Positions 406-663 (YKVGRTIGDG…AVQVLEHPWV (258 aa)) constitute a Protein kinase domain. Residues 412–420 (IGDGNFAVV) and Lys435 each bind ATP. Asp527 acts as the Proton acceptor in catalysis. Position 536 is a phosphotyrosine (Tyr536). Positions 711–723 (QVFRRRRNQDVRS) are enriched in basic and acidic residues. The tract at residues 711–756 (QVFRRRRNQDVRSRYKAQPAPPELNSESEDYSPSSSETVRSPNSPF) is disordered. Phosphoserine is present on residues Ser742, Ser751, and Ser754.

It belongs to the protein kinase superfamily. CAMK Ser/Thr protein kinase family. CaMK subfamily.

The catalysed reaction is L-seryl-[protein] + ATP = O-phospho-L-seryl-[protein] + ADP + H(+). The enzyme catalyses L-threonyl-[protein] + ATP = O-phospho-L-threonyl-[protein] + ADP + H(+). Its function is as follows. Probable kinase that may be involved in a calcium-signaling pathway controlling neuronal migration in the developing brain. May also participate in functions of the mature nervous system. The chain is Serine/threonine-protein kinase DCLK1 (Dclk1) from Mus musculus (Mouse).